Consider the following 319-residue polypeptide: Cobalamin biosynthesis protein CobD (319 aa).

3 helical membrane-spanning segments follow: residues 54 to 76 (VLLL…WLSY), 154 to 173 (GVTA…ALLY), and 301 to 318 (VLGF…IYAI).

It belongs to the CobD/CbiB family.

Its subcellular location is the cell membrane. The protein operates within cofactor biosynthesis; adenosylcobalamin biosynthesis. Functionally, converts cobyric acid to cobinamide by the addition of aminopropanol on the F carboxylic group. In Halalkalibacterium halodurans (strain ATCC BAA-125 / DSM 18197 / FERM 7344 / JCM 9153 / C-125) (Bacillus halodurans), this protein is Cobalamin biosynthesis protein CobD.